Consider the following 510-residue polypeptide: Propionyl-CoA carboxylase beta chain (510 aa).

A CoA carboxyltransferase N-terminal domain is found at 1 to 257 (MKDILEQLED…NNREKPPVRP (257 aa)). The tract at residues 1-504 (MKDILEQLED…NKSVQMPWKK (504 aa)) is carboxyltransferase. A CoA carboxyltransferase C-terminal domain is found at 261–504 (DPDRIEPSLD…NKSVQMPWKK (244 aa)). The tract at residues 292 to 325 (DEGDFYEIQEEFAKNIITGFIRLEGRTVGVVANQ) is acyl-CoA binding.

Belongs to the AccD/PCCB family. The holoenzyme is a dodecamer composed of 6 PccA/alpha subunits and 6 PccB/beta subunits.

It catalyses the reaction propanoyl-CoA + hydrogencarbonate + ATP = (S)-methylmalonyl-CoA + ADP + phosphate + H(+). It functions in the pathway metabolic intermediate metabolism; propanoyl-CoA degradation; succinyl-CoA from propanoyl-CoA: step 1/3. This is one of the 2 subunits of the biotin-dependent propionyl-CoA carboxylase (PCC), the enzyme catalyzing the carboxylation of propionyl-CoA/propanoyl-CoA to D-methylmalonyl-CoA/(S)-methylmalonyl-CoA. Within the holoenzyme, the alpha subunit catalyzes the ATP-dependent carboxylation of the biotin carried by the biotin carboxyl carrier (BCC) domain, while the beta subunit then tranfers the carboxyl group from carboxylated biotin to propionyl-CoA. This chain is Propionyl-CoA carboxylase beta chain, found in Roseobacter denitrificans (strain ATCC 33942 / OCh 114) (Erythrobacter sp. (strain OCh 114)).